The sequence spans 101 residues: NAD(P)H-quinone oxidoreductase subunit 4L, chloroplastic (101 aa).

Transmembrane regions (helical) follow at residues 2–22 (MLEHVLVLSAYLFSIGIYGLI), 32–52 (MCLELILNAVNINFVTFSDFF), and 61–81 (IFSIFVIAIAAAEAAIGPAIV).

This sequence belongs to the complex I subunit 4L family. In terms of assembly, NDH is composed of at least 16 different subunits, 5 of which are encoded in the nucleus.

The protein localises to the plastid. Its subcellular location is the chloroplast thylakoid membrane. The catalysed reaction is a plastoquinone + NADH + (n+1) H(+)(in) = a plastoquinol + NAD(+) + n H(+)(out). The enzyme catalyses a plastoquinone + NADPH + (n+1) H(+)(in) = a plastoquinol + NADP(+) + n H(+)(out). Its function is as follows. NDH shuttles electrons from NAD(P)H:plastoquinone, via FMN and iron-sulfur (Fe-S) centers, to quinones in the photosynthetic chain and possibly in a chloroplast respiratory chain. The immediate electron acceptor for the enzyme in this species is believed to be plastoquinone. Couples the redox reaction to proton translocation, and thus conserves the redox energy in a proton gradient. The protein is NAD(P)H-quinone oxidoreductase subunit 4L, chloroplastic of Morus indica (Mulberry).